The chain runs to 473 residues: Keratin, type I cytoskeletal 16 (473 aa).

The interval 1 to 116 is head; that stretch reads MTTCSRQFTS…AGGDGLLVGS (116 aa). Residues 117-152 form a coil 1A region; it reads EKVTMQNLNDRLASYLDKVRALEEANADLEVKIRDW. The region spanning 117–428 is the IF rod domain; it reads EKVTMQNLND…RLLEGEDAHL (312 aa). The interval 153–170 is linker 1; the sequence is YQRQRPSEIKDYSPYFKT. A coil 1B region spans residues 171 to 262; it reads IEDLRNKIIA…KNHEEEMLAL (92 aa). Residues 263 to 285 are linker 12; that stretch reads RGQTGGDVNVEMDAAPGVDLSRI. The tract at residues 286-424 is coil 2; it reads LNEMRDQYEQ…ATYRRLLEGE (139 aa). Positions 425–473 are tail; the sequence is DAHLSSQQASGQSYSSREVFTSSSSSSSRQTRPILKEQSSSSFSQGQSS. Residues 428–473 form a disordered region; it reads LSSQQASGQSYSSREVFTSSSSSSSRQTRPILKEQSSSSFSQGQSS. Composition is skewed to low complexity over residues 429 to 452 and 462 to 473; these read SSQQ…SSSS and QSSSSFSQGQSS.

This sequence belongs to the intermediate filament family. Heterodimer of a type I and a type II keratin. KRT16 associates with KRT6 isomers (KRT6A or KRT6B). Interacts with TCHP. Interacts with TRADD. In terms of tissue distribution, expressed in the corneal epithelium (at protein level).

Epidermis-specific type I keratin that plays a key role in skin. Acts as a regulator of innate immunity in response to skin barrier breach: required for some inflammatory checkpoint for the skin barrier maintenance. In Homo sapiens (Human), this protein is Keratin, type I cytoskeletal 16 (KRT16).